The following is a 206-amino-acid chain: Small ribosomal subunit protein uS4 (206 aa).

The S4 RNA-binding domain occupies 96–157 (SRLDNVVYRM…KAKNQARIQN (62 aa)).

Belongs to the universal ribosomal protein uS4 family. As to quaternary structure, part of the 30S ribosomal subunit. Contacts protein S5. The interaction surface between S4 and S5 is involved in control of translational fidelity.

In terms of biological role, one of the primary rRNA binding proteins, it binds directly to 16S rRNA where it nucleates assembly of the body of the 30S subunit. Functionally, with S5 and S12 plays an important role in translational accuracy. The chain is Small ribosomal subunit protein uS4 from Chromohalobacter salexigens (strain ATCC BAA-138 / DSM 3043 / CIP 106854 / NCIMB 13768 / 1H11).